We begin with the raw amino-acid sequence, 714 residues long: MEMTSAFTLNVRLDNIAVITIDVPGEKMNTLKAEFASQVRAIIKQLRENKELRGVVFVSAKPDNFIAGADINMIGNCKTAQEAEALARQGQQLMAEIHALPIQVIAAIHGACLGGGLELALACHGRVCTDDPKTVLGLPEVQLGLLPGSGGTQRLPRLIGVSTALEMILTGKQLRAKQALKLGLVDDVVPHSILLEAAVELAKKERPSSRPLPVRERILAGPLGRALLFKMVGKKTEHKTQGNYPATERILEVVETGLAQGTSSGYDAEARAFGELAMTPQSQALRSIFFASTDVKKDPGSDAPPAPLNSVGILGGGLMGGGIAYVTACKAGIPVRIKDINPQGINHALKYSWDQLEGKVRRRHLKASERDKQLALISGTTDYRGFAHRDLIIEAVFENLELKQQMVAEVEQNCAAHTIFASNTSSLPIGDIAAHATRPEQVIGLHFFSPVEKMPLVEIIPHAGTSAQTIATTVKLAKKQGKTPIVVRDKAGFYVNRILAPYINEAIRMLTQGERVEHIDAALVKFGFPVGPIQLLDEVGIDTGTKIIPVLEAAYGERFSAPANVVSSILNDDRKGRKNGRGFYLYGQKGRKSKKQVDPAIYPLIGTQGQGRISAPQVAERCVMLMLNEAVRCVDEQVIRSVRDGDIGAVFGIGFPPFLGGPFRYIDSLGAGEVVAIMQRLATQYGSRFTPCERLVEMGARGESFWKTTATDLQ.

Positions 1–190 are enoyl-CoA hydratase; it reads MEMTSAFTLN…KLGLVDDVVP (190 aa). Positions 306 to 714 are 3-hydroxyacyl-CoA dehydrogenase; sequence APLNSVGILG…FWKTTATDLQ (409 aa).

The protein in the N-terminal section; belongs to the enoyl-CoA hydratase/isomerase family. This sequence in the central section; belongs to the 3-hydroxyacyl-CoA dehydrogenase family. Heterotetramer of two alpha chains (FadJ) and two beta chains (FadI).

The protein resides in the cytoplasm. It carries out the reaction a (3S)-3-hydroxyacyl-CoA = a (2E)-enoyl-CoA + H2O. The catalysed reaction is a 4-saturated-(3S)-3-hydroxyacyl-CoA = a (3E)-enoyl-CoA + H2O. The enzyme catalyses a (3S)-3-hydroxyacyl-CoA + NAD(+) = a 3-oxoacyl-CoA + NADH + H(+). It catalyses the reaction (3S)-3-hydroxybutanoyl-CoA = (3R)-3-hydroxybutanoyl-CoA. It participates in lipid metabolism; fatty acid beta-oxidation. Functionally, catalyzes the formation of a hydroxyacyl-CoA by addition of water on enoyl-CoA. Also exhibits 3-hydroxyacyl-CoA epimerase and 3-hydroxyacyl-CoA dehydrogenase activities. Strongly involved in the anaerobic degradation of long and medium-chain fatty acids in the presence of nitrate and weakly involved in the aerobic degradation of long-chain fatty acids. In Escherichia coli (strain K12), this protein is Fatty acid oxidation complex subunit alpha (fadJ).